The primary structure comprises 234 residues: uncharacterized protein (234 aa).

Residues 103 to 211 form the tRNA-binding domain; it reads LAKKVPFVVC…SHIKIGKSFL (109 aa).

This is an uncharacterized protein from Mycoplasma pneumoniae (strain ATCC 29342 / M129 / Subtype 1) (Mycoplasmoides pneumoniae).